Here is a 455-residue protein sequence, read N- to C-terminus: Argininosuccinate lyase (455 aa).

The protein belongs to the lyase 1 family. Argininosuccinate lyase subfamily.

The protein resides in the cytoplasm. It carries out the reaction 2-(N(omega)-L-arginino)succinate = fumarate + L-arginine. Its pathway is amino-acid biosynthesis; L-arginine biosynthesis; L-arginine from L-ornithine and carbamoyl phosphate: step 3/3. The sequence is that of Argininosuccinate lyase from Shewanella sp. (strain MR-7).